Reading from the N-terminus, the 140-residue chain is UPF0299 membrane protein CGSHiGG_01475 (140 aa).

The next 4 helical transmembrane spans lie at 1–21 (MIQK…MLYL), 33–52 (VPGS…TRVI), 60–80 (GASL…VGII), and 92–112 (ILLV…GFLG).

The protein belongs to the UPF0299 family.

The protein resides in the cell inner membrane. In Haemophilus influenzae (strain PittGG), this protein is UPF0299 membrane protein CGSHiGG_01475.